The following is a 136-amino-acid chain: Ribosome-binding factor A (136 aa).

The protein belongs to the RbfA family. As to quaternary structure, monomer. Binds 30S ribosomal subunits, but not 50S ribosomal subunits or 70S ribosomes.

Its subcellular location is the cytoplasm. Its function is as follows. One of several proteins that assist in the late maturation steps of the functional core of the 30S ribosomal subunit. Associates with free 30S ribosomal subunits (but not with 30S subunits that are part of 70S ribosomes or polysomes). Required for efficient processing of 16S rRNA. May interact with the 5'-terminal helix region of 16S rRNA. This chain is Ribosome-binding factor A, found in Rhodopseudomonas palustris (strain BisB5).